Here is a 144-residue protein sequence, read N- to C-terminus: Ribosomal RNA large subunit methyltransferase H (144 aa).

Residues L63, G92, and 111–116 (LSPMTF) each bind S-adenosyl-L-methionine.

This sequence belongs to the RNA methyltransferase RlmH family. In terms of assembly, homodimer.

The protein localises to the cytoplasm. The catalysed reaction is pseudouridine(1915) in 23S rRNA + S-adenosyl-L-methionine = N(3)-methylpseudouridine(1915) in 23S rRNA + S-adenosyl-L-homocysteine + H(+). In terms of biological role, specifically methylates the pseudouridine at position 1915 (m3Psi1915) in 23S rRNA. This Parasynechococcus marenigrum (strain WH8102) protein is Ribosomal RNA large subunit methyltransferase H.